The primary structure comprises 359 residues: 4'-phosphopantetheinyl transferase A (359 aa).

It belongs to the P-Pant transferase superfamily.

The catalysed reaction is apo-[ACP] + CoA = holo-[ACP] + adenosine 3',5'-bisphosphate + H(+). Its activity is regulated as follows. Activity is inhibited bythe antifunfal copmpounds PD 404,182, 6-nitroso-1,2-benzopyrone, and calmidazolium chloride with IC(50) values of 3.9 uM, 35.2 uM, and 19.2 uM, respectively. In terms of biological role, acyl-carrier-protein synthase that transfers the 4'-phosphopantetheine moiety from coenzyme A to a Ser of an acyl-carrier-protein. The 4'-phosphopantetheine (4'-PPT) portion of CoA provides the essential prosthetic group for a number of carrier proteins and multi-domain enzymes, priming them for the acceptance of acyl building blocks in fatty acid synthesis and many aspects of secondary metabolism mediated by polyketide synthases (PKSs) and non-ribosomal peptide synthetases (NRPSs). PptA is able to transfer the cofactor to a broad range of enzymes with acyl- or peptidyl-carrier protein domains and activates target enzymes involved in the synthesis of lysine, but also secondary metabolites including gliotoxin, fumigaclavine C, fumiquinazole A, fumiquinazoline C, pyripyroprene A, fumagillin, the siderophores triacetylfusarinine C (TAFC) and ferricrocin (FC), and dihydroxy naphthalene (DHN)-melanin. Plays an essential role in virulence. The polypeptide is 4'-phosphopantetheinyl transferase A (Aspergillus fumigatus (strain ATCC MYA-4609 / CBS 101355 / FGSC A1100 / Af293) (Neosartorya fumigata)).